The following is a 175-amino-acid chain: Large ribosomal subunit protein uL10 (175 aa).

Belongs to the universal ribosomal protein uL10 family. As to quaternary structure, part of the ribosomal stalk of the 50S ribosomal subunit. The N-terminus interacts with L11 and the large rRNA to form the base of the stalk. The C-terminus forms an elongated spine to which L12 dimers bind in a sequential fashion forming a multimeric L10(L12)X complex.

In terms of biological role, forms part of the ribosomal stalk, playing a central role in the interaction of the ribosome with GTP-bound translation factors. In Cupriavidus taiwanensis (strain DSM 17343 / BCRC 17206 / CCUG 44338 / CIP 107171 / LMG 19424 / R1) (Ralstonia taiwanensis (strain LMG 19424)), this protein is Large ribosomal subunit protein uL10.